An 88-amino-acid polypeptide reads, in one-letter code: Small ribosomal subunit protein bS16 (88 aa).

The protein belongs to the bacterial ribosomal protein bS16 family.

This is Small ribosomal subunit protein bS16 from Thermus aquaticus.